The following is a 161-amino-acid chain: S-ribosylhomocysteine lyase (161 aa).

Fe cation is bound by residues His-58, His-62, and Cys-128.

The protein belongs to the LuxS family. As to quaternary structure, homodimer. Fe cation is required as a cofactor.

It catalyses the reaction S-(5-deoxy-D-ribos-5-yl)-L-homocysteine = (S)-4,5-dihydroxypentane-2,3-dione + L-homocysteine. Functionally, involved in the synthesis of autoinducer 2 (AI-2) which is secreted by bacteria and is used to communicate both the cell density and the metabolic potential of the environment. The regulation of gene expression in response to changes in cell density is called quorum sensing. Catalyzes the transformation of S-ribosylhomocysteine (RHC) to homocysteine (HC) and 4,5-dihydroxy-2,3-pentadione (DPD). The chain is S-ribosylhomocysteine lyase from Bifidobacterium adolescentis (strain ATCC 15703 / DSM 20083 / NCTC 11814 / E194a).